The chain runs to 1067 residues: Probable importin subunit beta-4 (1067 aa).

Residues 27 to 94 (ATRALETKYL…RSNLLDITLK (68 aa)) enclose the Importin N-terminal domain. 6 HEAT repeats span residues 159–196 (KLLL…VLES), 379–416 (GNLP…EIPT), 420–457 (KHHA…GLDK), 591–633 (PFLE…SVET), 890–927 (PFTR…FSTE), and 1013–1050 (QHLG…EIAP).

It belongs to the importin beta family.

The protein resides in the cytoplasm. Its subcellular location is the nucleus. The protein localises to the nucleus envelope. In terms of biological role, required for nuclear protein import, its predominant substrate seems to be ribosomal proteins. Binds to nucleoporins and the GTP-bound form of gsp1 (Ran). In Schizosaccharomyces pombe (strain 972 / ATCC 24843) (Fission yeast), this protein is Probable importin subunit beta-4 (kap123).